Reading from the N-terminus, the 170-residue chain is Photosystem I assembly protein Ycf3 (170 aa).

3 TPR repeats span residues A35 to P68, S72 to L105, and G120 to N153.

Belongs to the Ycf3 family.

It is found in the plastid. The protein resides in the chloroplast thylakoid membrane. Its function is as follows. Essential for the assembly of the photosystem I (PSI) complex. May act as a chaperone-like factor to guide the assembly of the PSI subunits. The chain is Photosystem I assembly protein Ycf3 from Oryza sativa (Rice).